The following is a 456-amino-acid chain: Chromosomal replication initiator protein DnaA (456 aa).

The domain I, interacts with DnaA modulators stretch occupies residues 1–83 (MTASLWQQCL…LRFDIGNRPH (83 aa)). Positions 83–119 (HPVAVARAPARGADPVNNSQKSWESKAEAKPEPNHKS) are domain II. The segment at 92–122 (ARGADPVNNSQKSWESKAEAKPEPNHKSNTN) is disordered. Basic and acidic residues predominate over residues 105–117 (WESKAEAKPEPNH). The tract at residues 120–336 (NTNVNYTFEN…GALNRVIANA (217 aa)) is domain III, AAA+ region. ATP contacts are provided by glycine 164, glycine 166, lysine 167, and threonine 168. The interval 337-456 (NFTGRAINID…YSNLIRTLSS (120 aa)) is domain IV, binds dsDNA.

The protein belongs to the DnaA family. As to quaternary structure, oligomerizes as a right-handed, spiral filament on DNA at oriC.

The protein resides in the cytoplasm. In terms of biological role, plays an essential role in the initiation and regulation of chromosomal replication. ATP-DnaA binds to the origin of replication (oriC) to initiate formation of the DNA replication initiation complex once per cell cycle. Binds the DnaA box (a 9 base pair repeat at the origin) and separates the double-stranded (ds)DNA. Forms a right-handed helical filament on oriC DNA; dsDNA binds to the exterior of the filament while single-stranded (ss)DNA is stabiized in the filament's interior. The ATP-DnaA-oriC complex binds and stabilizes one strand of the AT-rich DNA unwinding element (DUE), permitting loading of DNA polymerase. After initiation quickly degrades to an ADP-DnaA complex that is not apt for DNA replication. Binds acidic phospholipids. In Aeromonas hydrophila subsp. hydrophila (strain ATCC 7966 / DSM 30187 / BCRC 13018 / CCUG 14551 / JCM 1027 / KCTC 2358 / NCIMB 9240 / NCTC 8049), this protein is Chromosomal replication initiator protein DnaA.